We begin with the raw amino-acid sequence, 260 residues long: Endomucin (260 aa).

The N-terminal stretch at methionine 1–serine 18 is a signal peptide. Residues asparagine 19, asparagine 28, asparagine 97, and asparagine 103 are each glycosylated (N-linked (GlcNAc...) asparagine). The Extracellular segment spans residues asparagine 19–serine 189. Polar residues-rich tracts occupy residues glutamine 119 to threonine 133 and alanine 145 to isoleucine 170. Residues glutamine 119–alanine 182 are disordered. N-linked (GlcNAc...) asparagine glycans are attached at residues asparagine 163 and asparagine 177. The helical transmembrane segment at isoleucine 190–glycine 210 threads the bilayer. Residues leucine 211–asparagine 260 lie on the Cytoplasmic side of the membrane. Residue serine 236 is modified to Phosphoserine.

Highly O-glycosylated. Sialic acid-rich glycoprotein.

Its subcellular location is the membrane. Endothelial sialomucin, also called endomucin or mucin-like sialoglycoprotein, which interferes with the assembly of focal adhesion complexes and inhibits interaction between cells and the extracellular matrix. The chain is Endomucin (EMCN) from Pongo abelii (Sumatran orangutan).